The primary structure comprises 293 residues: 4-diphosphocytidyl-2-C-methyl-D-erythritol kinase (293 aa).

Lys10 is a catalytic residue. 94-104 (PVSAGLAGGSS) lines the ATP pocket. Asp136 is an active-site residue.

This sequence belongs to the GHMP kinase family. IspE subfamily.

It catalyses the reaction 4-CDP-2-C-methyl-D-erythritol + ATP = 4-CDP-2-C-methyl-D-erythritol 2-phosphate + ADP + H(+). The protein operates within isoprenoid biosynthesis; isopentenyl diphosphate biosynthesis via DXP pathway; isopentenyl diphosphate from 1-deoxy-D-xylulose 5-phosphate: step 3/6. Catalyzes the phosphorylation of the position 2 hydroxy group of 4-diphosphocytidyl-2C-methyl-D-erythritol. The polypeptide is 4-diphosphocytidyl-2-C-methyl-D-erythritol kinase (Listeria monocytogenes serovar 1/2a (strain ATCC BAA-679 / EGD-e)).